We begin with the raw amino-acid sequence, 247 residues long: Syntaxin-like protein fsv1 (247 aa).

The stretch at 27–94 (NPDEEIESSL…FEKQRRASSI (68 aa)) forms a coiled coil. The segment at 88 to 130 (QRRASSIPADGTSAFSANPQVASTNNKLTPLPSLQKTTSSSEG) is disordered. Polar residues predominate over residues 100–130 (SAFSANPQVASTNNKLTPLPSLQKTTSSSEG). Positions 159–221 (QQMLNEQEES…DHAKNRLNKV (63 aa)) constitute a t-SNARE coiled-coil homology domain.

It is found in the golgi apparatus membrane. The protein localises to the prevacuolar compartment membrane. In terms of biological role, involved in vesicle-mediated protein transport between the Golgi and the vacuole. The polypeptide is Syntaxin-like protein fsv1 (fsv1) (Schizosaccharomyces pombe (strain 972 / ATCC 24843) (Fission yeast)).